The chain runs to 330 residues: RNA polymerase sigma factor RpoS (330 aa).

Residues 56–89 (DATQLYLGEIGYSPLLTAEEEVYFARRALRGDVA) are sigma-70 factor domain-1. The interval 94–164 (MIESNLRLVV…ERAIMNQTRT (71 aa)) is sigma-70 factor domain-2. An Interaction with polymerase core subunit RpoC motif is present at residues 118-121 (DLIE). Residues 174–249 (ELNVYLRTAR…DEKENGPEDT (76 aa)) are sigma-70 factor domain-3. The sigma-70 factor domain-4 stretch occupies residues 262-315 (WLFELNAKQREVLARRFGLLGYEAATLEDVGREIGLTRERVRQIQVEGLRRLRE). Positions 288 to 307 (LEDVGREIGLTRERVRQIQV) form a DNA-binding region, H-T-H motif.

Belongs to the sigma-70 factor family. RpoS subfamily. As to quaternary structure, interacts with the RNA polymerase core enzyme and RssB.

It localises to the cytoplasm. Sigma factors are initiation factors that promote the attachment of RNA polymerase to specific initiation sites and are then released. This sigma factor is the master transcriptional regulator of the stationary phase and the general stress response. Controls, positively or negatively, the expression of several hundred genes, which are mainly involved in metabolism, transport, regulation and stress management. Its function is as follows. Protects stationary phase cells from killing induced by endoribonuclease MazF. This is RNA polymerase sigma factor RpoS from Escherichia coli (strain K12).